The following is a 342-amino-acid chain: Deoxyhypusine synthase regulatory subunit (342 aa).

Residues 72 to 76 (SNLIS), 98 to 100 (TAG), glutamate 104, aspartate 213, 282 to 283 (TG), and 316 to 317 (DA) contribute to the NAD(+) site.

Belongs to the deoxyhypusine synthase family. In terms of assembly, heterotetramer formed by a homodimer of the non-catalytic regulatory subunit DHSp and a homodimer of the catalytic subunit DHSc where DHSc appears to bind spermidine and DHSp appears to bind NAD(+).

It functions in the pathway protein modification; eIF5A hypusination. In terms of biological role, required for the activation and stability of deoxyhypusine synthase DHSc. Required for cell growth and survival. The protein is Deoxyhypusine synthase regulatory subunit of Trypanosoma brucei brucei (strain 927/4 GUTat10.1).